Here is a 170-residue protein sequence, read N- to C-terminus: MDTRNKAQLLVLLTLLSVLFSQTSAWPLYRAPSALRLGDRIPFEGANEPDQVSLKEDIDMLQNALAENDTPYYDVSRNARHADGVFTSDFSKLLGQLSAKKYLESLMGKRVSSNISEDPVPVKRHSDAVFTDNYTRLRKQMAVKKYLNSILNGKRSSEGESPDFPEELEK.

A signal peptide spans 1–20; sequence MDTRNKAQLLVLLTLLSVLF. Residues 21-79 constitute a propeptide that is removed on maturation; that stretch reads SQTSAWPLYRAPSALRLGDRIPFEGANEPDQVSLKEDIDMLQNALAENDTPYYDVSRNA. Ser-76 bears the Phosphoserine mark. Met-107 bears the Methionine amide mark. Asn-152 carries the post-translational modification Asparagine amide. Positions 156-170 are excised as a propeptide; the sequence is SSEGESPDFPEELEK.

Belongs to the glucagon family.

The protein localises to the secreted. Functionally, VIP is a neuropeptide involved in a diverse array of physiological processes through activating the PACAP subfamily of class B1 G protein-coupled receptors: VIP receptor 1 (VPR1) and VIP receptor 2 (VPR2). Abundantly expressed throughout the CNS and peripheral nervous systems where they primarily exert neuroprotective and immune modulatory roles. Also causes vasodilation, lowers arterial blood pressure, stimulates myocardial contractility, increases glycogenolysis and relaxes the smooth muscle of trachea, stomach and gall bladder. In terms of biological role, PHM-27 and PHV-42 are two bioactive forms from proteolysis of the same precursor protein, that cause vasodilation. PHM-27 is a potent agonist of the calcitonin receptor CALCR, with similar efficacy as calcitonin. The protein is VIP peptides of Homo sapiens (Human).